Here is a 314-residue protein sequence, read N- to C-terminus: Dihydroorotate dehydrogenase (fumarate) (314 aa).

Substrate contacts are provided by residues Lys-46, 70–74 (NSMGL), and Asn-130. Residue 46 to 47 (KS) coordinates FMN. Asn-130 is an FMN binding site. Residues Ser-132 and Cys-133 each act as nucleophile in the active site. Positions 167 and 195 each coordinate FMN. 196–197 (NS) contributes to the substrate binding site. FMN is bound by residues Gly-224, 252 to 253 (GG), and 274 to 275 (GT).

The protein belongs to the dihydroorotate dehydrogenase family. Type 1 subfamily. In terms of assembly, homodimer. FMN serves as cofactor.

It localises to the cytoplasm. The enzyme catalyses (S)-dihydroorotate + fumarate = orotate + succinate. The protein operates within pyrimidine metabolism; UMP biosynthesis via de novo pathway. In terms of biological role, catalyzes the conversion of dihydroorotate to orotate with fumarate as the electron acceptor. This is Dihydroorotate dehydrogenase (fumarate) (URA1) from Saccharomyces paradoxus (Yeast).